The chain runs to 736 residues: Subtilisin-like protease SBT4.11 (736 aa).

An N-terminal signal peptide occupies residues 1-25 (MAKRGAFSSFHSFLIVLLFLNSVLA). Positions 26–113 (VTHGHQDKQV…VFPNKKLKLQ (88 aa)) are cleaved as a propeptide — activation peptide. One can recognise an Inhibitor I9 domain in the interval 35-112 (VYIVYMGSLP…SVFPNKKLKL (78 aa)). The region spanning 117 to 579 (SWDFMGLKEG…AGHVDPIAAT (463 aa)) is the Peptidase S8 domain. Residue Asp-145 is the Charge relay system of the active site. Asn-176 carries N-linked (GlcNAc...) asparagine glycosylation. Catalysis depends on His-200, which acts as the Charge relay system. 2 N-linked (GlcNAc...) asparagine glycosylation sites follow: Asn-215 and Asn-223. Positions 355 to 437 (KFPLVYGKSA…GLQKDDFESV (83 aa)) constitute a PA domain. The Charge relay system role is filled by Ser-518. Residues Asn-555, Asn-602, Asn-638, Asn-646, and Asn-656 are each glycosylated (N-linked (GlcNAc...) asparagine).

The protein belongs to the peptidase S8 family. The C-terminal propeptide is autocleaved.

Its subcellular location is the secreted. The polypeptide is Subtilisin-like protease SBT4.11 (Arabidopsis thaliana (Mouse-ear cress)).